The following is a 191-amino-acid chain: Iron-sulfur flavoprotein (191 aa).

Cysteine 47, cysteine 50, cysteine 53, and cysteine 59 together coordinate [4Fe-4S] cluster.

This sequence belongs to the SsuE family. Isf subfamily. In terms of assembly, homodimer. FMN serves as cofactor. It depends on [4Fe-4S] cluster as a cofactor.

Redox-active protein probably involved in electron transport during fermentation of acetate to methane. The protein is Iron-sulfur flavoprotein (isf) of Methanosarcina thermophila.